The following is a 338-amino-acid chain: Ketol-acid reductoisomerase (NADP(+)) (338 aa).

The region spanning 1 to 181 is the KARI N-terminal Rossmann domain; sequence MKVFYDKDCD…GGGRAGIIET (181 aa). NADP(+) contacts are provided by residues 24 to 27, R47, and S52; that span reads YGSQ. H107 is an active-site residue. G133 contacts NADP(+). A KARI C-terminal knotted domain is found at 182 to 327; sequence DFREETETDL…GKLRAMMPWI (146 aa). Mg(2+) contacts are provided by D190, E194, E226, and E230. Residue S251 coordinates substrate.

The protein belongs to the ketol-acid reductoisomerase family. It depends on Mg(2+) as a cofactor.

It catalyses the reaction (2R)-2,3-dihydroxy-3-methylbutanoate + NADP(+) = (2S)-2-acetolactate + NADPH + H(+). The enzyme catalyses (2R,3R)-2,3-dihydroxy-3-methylpentanoate + NADP(+) = (S)-2-ethyl-2-hydroxy-3-oxobutanoate + NADPH + H(+). It participates in amino-acid biosynthesis; L-isoleucine biosynthesis; L-isoleucine from 2-oxobutanoate: step 2/4. Its pathway is amino-acid biosynthesis; L-valine biosynthesis; L-valine from pyruvate: step 2/4. Its function is as follows. Involved in the biosynthesis of branched-chain amino acids (BCAA). Catalyzes an alkyl-migration followed by a ketol-acid reduction of (S)-2-acetolactate (S2AL) to yield (R)-2,3-dihydroxy-isovalerate. In the isomerase reaction, S2AL is rearranged via a Mg-dependent methyl migration to produce 3-hydroxy-3-methyl-2-ketobutyrate (HMKB). In the reductase reaction, this 2-ketoacid undergoes a metal-dependent reduction by NADPH to yield (R)-2,3-dihydroxy-isovalerate. This is Ketol-acid reductoisomerase (NADP(+)) from Bordetella petrii (strain ATCC BAA-461 / DSM 12804 / CCUG 43448).